Here is a 972-residue protein sequence, read N- to C-terminus: MNTNKATATYLKSIMLPETGPASIPDDITERHILKQETSSYNLEVSESGSGVLVCFPGAPGSRIGAHYRWNANQTGLEFDQWLETSQDLKKAFNYGRLISRKYDIQSSTLPAGLYALNGTLNAATFEGSLSEVESLTYNSLMSLTTNPQDKVNNQLVTKGVTVLNLPTGFDKPYVRLEDETPQGLQSMNGAKMRCTAAIAPRRYEIDLPSQRLPPVPATGTLTTLYEGNADIVNSTTVTGDINFSLAEQPADETKFDFQLDFMGLDNDVPVVTVVSSVLATNDNYRGVSAKMTQSIPTENITKPITRVKLSYKINQQTAIGNVATLGTMGPASVSFSSGNGNVPGVLRPITLVAYEKMTPLSILTVAGVSNYELIPNPELLKNMVTRYGKYDPEGLNYAKMILSHREELDIRTVWRTEEYKERTRVFNEITDFSSDLPTSKAWGWRDIVRGIRKVAAPVLSTLFPMAAPLIGMADQFIGDLTKTNAAGGRYHSMAAGGRYKDVLESWASGGPDGKFSRALKNRLESANYEEVELPPPSKGVIVPVVHTVKSAPGEAFGSLAIIIPGEYPELLDANQQVLSHFANDTGSVWGIGEDIPFEGDNMCYTALPLKEIKRNGNIVVEKIFAGPIMGPSAQLGLSLLVNDIEDGVPRMVFTGEIADDEETIIPICGVDIKAIAAHEQGLPLIGNQPGVDEEVRNTSLAAHLIQTGTLPVQRAKGSNKRIKYLGELMASNASGMDEELQRLLNATMARAKEVQDAEIYKLLKLMAWTRKNDLTDHMYEWSKEDPDALKFGKLISTPPKHPEKPKGPDQHHAQEARATRISLDAVRAGADFATPEWVALNNYRGPSPGQFKYYLITGREPEPGDEYEDYIKQPIVKPTDMNKIRRLANSVYGLPHQEPAPEEFYDAVAAVFAQNGGRGPDQDQMQDLRELARQMKRRPRNADAPRRTRAPAEPAPPGRSRFTPSGDNAEV.

D26 is an a divalent metal cation binding site. The region spanning 509 to 734 is the Peptidase S50 domain; it reads SGGPDGKFSR…YLGELMASNA (226 aa). S633 acts as the Nucleophile in catalysis. The active site involves K674. Disordered regions lie at residues 794–817 and 916–972; these read KLIS…AQEA and NGGR…NAEV. The span at 801–817 shows a compositional bias: basic and acidic residues; it reads KHPEKPKGPDQHHAQEA. The span at 963–972 shows a compositional bias: polar residues; it reads FTPSGDNAEV.

As to quaternary structure, homotrimer. A central divalent metal (possibly cobalt) stabilizes the VP2 trimer. In terms of assembly, homodimer. interacts (via C-terminus) with VP1 in the cytoplasm. Interacts with VP2. In terms of processing, specific enzymatic cleavages yield mature proteins. The capsid assembly seems to be regulated by polyprotein processing. The protease VP4 cleaves itself off the polyprotein, thus releasing pre-VP2 and VP3 within the infected cell. During capsid assembly, the C-terminus of pre-VP2 is further processed by VP4, giving rise to VP2, the external capsid protein and three small peptides that all stay closely associated with the capsid.

It localises to the virion. The protein resides in the host cytoplasm. In terms of biological role, capsid protein VP2 self assembles to form an icosahedral capsid with a T=13 symmetry, about 70 nm in diameter, and consisting of 260 VP2 trimers. The capsid encapsulates the genomic dsRNA. VP2 is also involved in attachment and entry into the host cell. Its function is as follows. The precursor of VP2 plays an important role in capsid assembly. First, pre-VP2 and VP2 oligomers assemble to form a procapsid. Then, the pre-VP2 intermediates may be processed into VP2 proteins by proteolytic cleavage mediated by VP4 to obtain the mature virion. The final capsid is composed of pentamers and hexamers but VP2 has a natural tendency to assemble into all-pentameric structures. Therefore pre-VP2 may be required to allow formation of the hexameric structures. Functionally, protease VP4 is a serine protease that cleaves the polyprotein into its final products. Pre-VP2 is first partially cleaved, and may be completely processed by VP4 upon capsid maturation. Capsid protein VP3 plays a key role in virion assembly by providing a scaffold for the capsid made of VP2. May self-assemble to form a T=4-like icosahedral inner-capsid composed of at least 180 trimers. Plays a role in genomic RNA packaging by recruiting VP1 into the capsid and interacting with the dsRNA genome segments to form a ribonucleoprotein complex. Additionally, the interaction of the VP3 C-terminal tail with VP1 removes the inherent structural blockade of the polymerase active site. Thus, VP3 can also function as a transcriptional activator. In terms of biological role, structural peptide 1 is a small peptide derived from pre-VP2 C-terminus. It destabilizes and perforates cell membranes, suggesting a role during entry. Its function is as follows. Structural peptide 2 is a small peptide derived from pVP2 C-terminus. It is not essential for the virus viability, but viral growth is affected when missing. Functionally, structural peptide 3 is a small peptide derived from pVP2 C-terminus. It is not essential for the virus viability, but viral growth is affected when missing. The protein is Structural polyprotein of Infectious pancreatic necrosis virus (strain Sp) (IPNV).